The sequence spans 225 residues: 3-dehydroquinate dehydratase (225 aa).

3-dehydroquinate contacts are provided by residues S6, 30–32 (EWR), and R62. Catalysis depends on H118, which acts as the Proton donor/acceptor. Residue K143 is the Schiff-base intermediate with substrate of the active site. 3-dehydroquinate contacts are provided by R186, S205, and Q209.

This sequence belongs to the type-I 3-dehydroquinase family. In terms of assembly, homodimer.

It carries out the reaction 3-dehydroquinate = 3-dehydroshikimate + H2O. Its pathway is metabolic intermediate biosynthesis; chorismate biosynthesis; chorismate from D-erythrose 4-phosphate and phosphoenolpyruvate: step 3/7. In terms of biological role, involved in the third step of the chorismate pathway, which leads to the biosynthesis of aromatic amino acids. Catalyzes the cis-dehydration of 3-dehydroquinate (DHQ) and introduces the first double bond of the aromatic ring to yield 3-dehydroshikimate. The sequence is that of 3-dehydroquinate dehydratase from Streptococcus pneumoniae (strain ATCC 700669 / Spain 23F-1).